Reading from the N-terminus, the 327-residue chain is Fructose import binding protein FruE (327 aa).

The signal sequence occupies residues 1 to 22 (MKNWKKAIALVASAAALVSVAA). Cysteine 23 carries the N-palmitoyl cysteine lipid modification. Cysteine 23 carries S-diacylglycerol cysteine lipidation.

It belongs to the bacterial solute-binding protein 2 family. As to quaternary structure, the complex is composed of an ATP-binding protein (FruK), two transmembrane proteins (FruF and FruG) and a solute-binding protein (FruE).

It localises to the cell membrane. Part of the high-affinity ABC transporter complex FruEKFG involved in fructose uptake. Can also transport ribose and xylose, with lower affinity. Binds fructose, ribose and xylose, with fructose as the preferred substrate. This is Fructose import binding protein FruE from Bifidobacterium longum (strain NCC 2705).